We begin with the raw amino-acid sequence, 94 residues long: MKKTFTGVVVSDKADKTVSVKVERRFMHPLYGKVVTRSKKYAAHDEQNEYRIGDRVEIIAVRPISKTKTWKVTRLIERPRGIETTAVETEGGNA.

The protein belongs to the universal ribosomal protein uS17 family. As to quaternary structure, part of the 30S ribosomal subunit.

Functionally, one of the primary rRNA binding proteins, it binds specifically to the 5'-end of 16S ribosomal RNA. This chain is Small ribosomal subunit protein uS17, found in Deinococcus geothermalis (strain DSM 11300 / CIP 105573 / AG-3a).